Consider the following 259-residue polypeptide: Protein unc-50 homolog (259 aa).

The residue at position 1 (methionine 1) is an N-acetylmethionine. The Cytoplasmic segment spans residues 1-82; that stretch reads MLPSTSVNSL…TKDQWARDDP (82 aa). Serine 6 is subject to Phosphoserine. The helical transmembrane segment at 83–103 threads the bilayer; the sequence is AFLVLLSIWLCVSTIGFGFVL. Topologically, residues 104 to 115 are lumenal; that stretch reads DMGFFETIKLLL. Residues 116–136 traverse the membrane as a helical segment; it reads WVVLIDCVGVGLLIATLMWFI. Over 137 to 163 the chain is Cytoplasmic; it reads SNKYLVKRQSRDYDVEWGYAFDVHLNA. The chain crosses the membrane as a helical span at residues 164 to 184; it reads FYPLLVILHFIQLFFINHVIL. Over 185-187 the chain is Lumenal; it reads TDT. Residues 188-208 form a helical membrane-spanning segment; sequence FIGYLVGNTLWLVAVGYYIYV. The Cytoplasmic portion of the chain corresponds to 209–222; that stretch reads TFLGYSALPFLKNT. A helical transmembrane segment spans residues 223-243; it reads VILLYPFAPLILLYGLSLALG. Residues 244 to 259 are Lumenal-facing; the sequence is WNFTHTLCSFYKYRVK.

The protein belongs to the unc-50 family. Present in periodontal ligament fibroblasts (at protein level).

The protein localises to the nucleus inner membrane. The protein resides in the golgi apparatus membrane. Involved in the cell surface expression of neuronal nicotinic receptors. Binds RNA. This is Protein unc-50 homolog (UNC50) from Homo sapiens (Human).